The chain runs to 897 residues: Alanine--tRNA ligase (897 aa).

Zn(2+) contacts are provided by His-581, His-585, Cys-684, and His-688.

It belongs to the class-II aminoacyl-tRNA synthetase family. Zn(2+) serves as cofactor.

It is found in the cytoplasm. It carries out the reaction tRNA(Ala) + L-alanine + ATP = L-alanyl-tRNA(Ala) + AMP + diphosphate. In terms of biological role, catalyzes the attachment of alanine to tRNA(Ala) in a two-step reaction: alanine is first activated by ATP to form Ala-AMP and then transferred to the acceptor end of tRNA(Ala). Also edits incorrectly charged Ser-tRNA(Ala) and Gly-tRNA(Ala) via its editing domain. This chain is Alanine--tRNA ligase, found in Mycobacterium sp. (strain KMS).